Here is a 183-residue protein sequence, read N- to C-terminus: Ribosome-recycling factor (183 aa).

The protein belongs to the RRF family.

Its subcellular location is the cytoplasm. Responsible for the release of ribosomes from messenger RNA at the termination of protein biosynthesis. May increase the efficiency of translation by recycling ribosomes from one round of translation to another. This Clostridium tetani (strain Massachusetts / E88) protein is Ribosome-recycling factor.